The chain runs to 431 residues: MTSTVESLSSVKKKISFEIPADRVTSEIDKVFEKIRKRAAIKGFRKGKAPQSLIEKHYADVMEGDVLKNLFEETYFKALAEHKIFPVSHPVIDSDEIKRGTPFTYSATVEVLPEIDVKDYNGLEVAKETFTPDESIVEKRLQEMRENMSHLRSLEEGSVAEDGHFAVIDFTGYVDGVPFEGGSAESYQLELGSGRFIPGFEEQIVGMKTGESKSMSLNFPEDYWNKDLAGKEARFDVILSEIKVKELPELNDEFAAQMGEFDTITQLRDKIAELYEKQENDRIKADLQDRVVQALIEKNEIEVPSTLVDRQLQTMLANAQNRLAQQRLTFEMMGMNEESFKAQYRTVAENQVKGSLLLEAVAKKEGISVEEADIEKKLLEIAGGNEEELGRVKSFYEQNRAARENLVAHLAEEKVMSFLLGSAVISEKTKE.

The 86-residue stretch at 163-248 (GHFAVIDFTG…LSEIKVKELP (86 aa)) folds into the PPIase FKBP-type domain.

It belongs to the FKBP-type PPIase family. Tig subfamily.

The protein localises to the cytoplasm. It catalyses the reaction [protein]-peptidylproline (omega=180) = [protein]-peptidylproline (omega=0). Involved in protein export. Acts as a chaperone by maintaining the newly synthesized protein in an open conformation. Functions as a peptidyl-prolyl cis-trans isomerase. In Geobacter sulfurreducens (strain ATCC 51573 / DSM 12127 / PCA), this protein is Trigger factor.